A 346-amino-acid chain; its full sequence is Mannonate dehydratase (346 aa).

The protein belongs to the mannonate dehydratase family. Fe(2+) is required as a cofactor. The cofactor is Mn(2+).

It catalyses the reaction D-mannonate = 2-dehydro-3-deoxy-D-gluconate + H2O. Its pathway is carbohydrate metabolism; pentose and glucuronate interconversion. Catalyzes the dehydration of D-mannonate. The protein is Mannonate dehydratase of Cupriavidus taiwanensis (strain DSM 17343 / BCRC 17206 / CCUG 44338 / CIP 107171 / LMG 19424 / R1) (Ralstonia taiwanensis (strain LMG 19424)).